A 287-amino-acid polypeptide reads, in one-letter code: Pyridoxal kinase PdxY (287 aa).

Substrate is bound by residues Ser9 and Met44 to Gln45. ATP-binding residues include Asp111, Ala142, Glu147, and Lys180. Residue Asp221 coordinates substrate.

The protein belongs to the pyridoxine kinase family. PdxY subfamily. In terms of assembly, homodimer. Mg(2+) is required as a cofactor.

The catalysed reaction is pyridoxal + ATP = pyridoxal 5'-phosphate + ADP + H(+). It functions in the pathway cofactor metabolism; pyridoxal 5'-phosphate salvage; pyridoxal 5'-phosphate from pyridoxal: step 1/1. Its function is as follows. Pyridoxal kinase involved in the salvage pathway of pyridoxal 5'-phosphate (PLP). Catalyzes the phosphorylation of pyridoxal to PLP. The polypeptide is Pyridoxal kinase PdxY (Burkholderia pseudomallei (strain K96243)).